Consider the following 1382-residue polypeptide: DNA-directed RNA polymerase subunit beta' (1382 aa).

Zn(2+) is bound by residues cysteine 70, cysteine 72, cysteine 85, and cysteine 88. Mg(2+) is bound by residues aspartate 460, aspartate 462, and aspartate 464. The Zn(2+) site is built by cysteine 808, cysteine 882, cysteine 889, and cysteine 892.

It belongs to the RNA polymerase beta' chain family. In terms of assembly, the RNAP catalytic core consists of 2 alpha, 1 beta, 1 beta' and 1 omega subunit. When a sigma factor is associated with the core the holoenzyme is formed, which can initiate transcription. The cofactor is Mg(2+). It depends on Zn(2+) as a cofactor.

The enzyme catalyses RNA(n) + a ribonucleoside 5'-triphosphate = RNA(n+1) + diphosphate. In terms of biological role, DNA-dependent RNA polymerase catalyzes the transcription of DNA into RNA using the four ribonucleoside triphosphates as substrates. The sequence is that of DNA-directed RNA polymerase subunit beta' from Geobacter sp. (strain M21).